A 1101-amino-acid chain; its full sequence is Nuclear pore complex protein NUP107 (1101 aa).

The protein belongs to the nucleoporin Nup84/Nup107 family. As to quaternary structure, part of the nuclear pore complex (NPC). The NPC has an eight-fold symmetrical structure comprising a central transport channel and two rings, the cytoplasmic and nuclear rings, to which eight filaments are attached. The cytoplasmic filaments have loose ends, while the nuclear filaments are joined in a distal ring, forming a nuclear basket. NPCs are highly dynamic in configuration and composition, and can be devided in 3 subcomplexes, the NUP62 subcomplex, the NUP107-160 subcomplex and the NUP93 subcomplex, containing approximately 30 different nucleoporin proteins.

The protein localises to the nucleus envelope. It is found in the nucleus. The protein resides in the nuclear pore complex. The chain is Nuclear pore complex protein NUP107 from Arabidopsis thaliana (Mouse-ear cress).